The chain runs to 983 residues: Anion exchange protein 4 (983 aa).

Residues 1–48 (MEMKLPGQEGFEASSAPRNIPSGELDSNPDPGTGPSPDGPSDTESKEL) form a disordered region. Residue asparagine 183 is glycosylated (N-linked (GlcNAc...) asparagine). Disordered regions lie at residues 186-205 (TGTR…DNEE) and 332-357 (RIPP…RGPA). 4 helical membrane passes run 415 to 435 (AVLY…GLLG), 443 to 463 (GVLE…LMAG), 500 to 520 (VGIW…SVLV), and 530 to 550 (GFCA…MLNL). The membrane (anion exchange) stretch occupies residues 415-983 (AVLYIYLATV…KAPEINISVN (569 aa)). 2 N-linked (GlcNAc...) asparagine glycosylation sites follow: asparagine 576 and asparagine 600. The next 7 membrane-spanning stretches (helical) occupy residues 624–644 (VPDI…FAMA), 665–685 (FSSV…GLAT), 712–732 (PWWW…LIFM), 758–778 (LFCV…WYVS), 815–835 (GLVV…LKFI), 837–857 (MPVL…SIQF), and 899–919 (LWII…LGLV). Over residues 946 to 957 (RSIPEKGLEPEH) the composition is skewed to basic and acidic residues. The interval 946–983 (RSIPEKGLEPEHSFSGSDSEDSELMYQPKAPEINISVN) is disordered. N-linked (GlcNAc...) asparagine glycosylation occurs at asparagine 979.

This sequence belongs to the anion exchanger (TC 2.A.31) family. In terms of tissue distribution, kidney specific.

The protein resides in the basolateral cell membrane. The catalysed reaction is 2 hydrogencarbonate(out) + chloride(in) + Na(+)(out) = 2 hydrogencarbonate(in) + chloride(out) + Na(+)(in). It carries out the reaction K(+)(in) + 2 hydrogencarbonate(in) + chloride(out) = K(+)(out) + 2 hydrogencarbonate(out) + chloride(in). It catalyses the reaction Li(+)(in) + 2 hydrogencarbonate(in) + chloride(out) = Li(+)(out) + 2 hydrogencarbonate(out) + chloride(in). The enzyme catalyses Rb(+)(in) + 2 hydrogencarbonate(in) + chloride(out) = Rb(+)(out) + 2 hydrogencarbonate(out) + chloride(in). The catalysed reaction is Cs(+)(in) + 2 hydrogencarbonate(in) + chloride(out) = Cs(+)(out) + 2 hydrogencarbonate(out) + chloride(in). In terms of biological role, electroneutral Cl(-)/HCO3(-) antiporter that favors chloride ion entry and efflux of hydrogencarbonate and sodium ion across the basolateral membrane and may participate in salivary secretion. Also mediates Cl(-)/HCO3(-) exchange activity in the presence of K(+) as well as Cs(+), Li(+), and Rb(+). Does not contribute to Cl(-)/HCO3(-) exchanger in the apical membrane of the upper villous epithelium. In Homo sapiens (Human), this protein is Anion exchange protein 4.